Consider the following 359-residue polypeptide: Heme A synthase (359 aa).

Helical transmembrane passes span 8-28 (IMSI…VVGG), 94-114 (LLGR…CYLK), 124-144 (LLLI…MVKS), 159-179 (GHLL…LIII), and 215-235 (IIIF…GLDA). H274 is a heme binding site. 3 helical membrane passes run 276 to 296 (WFGI…IILN), 303 to 323 (MGMV…ITLL), and 328 to 348 (ILAA…FLFI). A heme-binding site is contributed by H334.

Belongs to the COX15/CtaA family. Type 2 subfamily. Interacts with CtaB. It depends on heme b as a cofactor.

The protein resides in the cell membrane. It catalyses the reaction Fe(II)-heme o + 2 A + H2O = Fe(II)-heme a + 2 AH2. Its pathway is porphyrin-containing compound metabolism; heme A biosynthesis; heme A from heme O: step 1/1. In terms of biological role, catalyzes the conversion of heme O to heme A by two successive hydroxylations of the methyl group at C8. The first hydroxylation forms heme I, the second hydroxylation results in an unstable dihydroxymethyl group, which spontaneously dehydrates, resulting in the formyl group of heme A. This chain is Heme A synthase, found in Orientia tsutsugamushi (strain Boryong) (Rickettsia tsutsugamushi).